The following is a 630-amino-acid chain: Sodium-dependent serotonin transporter (630 aa).

At 1-87 (METTPLNSQK…ERETWGKKMD (87 aa)) the chain is on the cytoplasmic side. The interval 23-60 (ENGVLQKGVPTTADRAEPSQISNGYSAVPSTSAGDEAS) is disordered. Residues 41–55 (SQISNGYSAVPSTSA) show a composition bias toward polar residues. Phosphotyrosine is present on Tyr47. The chain crosses the membrane as a helical span at residues 88–112 (FLLSVIGYAVDLGNIWRFPYICYQN). The Na(+) site is built by Gly94, Ala96, Val97, Asp98, and Asn101. A serotonin-binding site is contributed by Asp98. Over 113–115 (GGG) the chain is Extracellular. A helical membrane pass occupies residues 116 to 135 (AFLLPYTIMAIFGGIPLFYM). Topologically, residues 136 to 160 (ELALGQYHRNGCISIWRKICPIFKG) are cytoplasmic. Residue Tyr142 is modified to Phosphotyrosine. A helical transmembrane segment spans residues 161 to 186 (IGYAICIIAFYIASYYNTIIAWALYY). Topologically, residues 187–252 (LISSLTDRLP…KGLQDLGTIS (66 aa)) are extracellular. Cys200 and Cys209 are oxidised to a cystine. Residues Asn208 and Asn217 are each glycosylated (N-linked (GlcNAc...) asparagine). The chain crosses the membrane as a helical span at residues 253–271 (WQLTLCIVLIFTVIYFSIW). The Cytoplasmic segment spans residues 272-277 (KGVKTS). Residue Thr276 is modified to Phosphothreonine. A helical membrane pass occupies residues 278–297 (GKVVWVTATFPYIVLSVLLV). Residues 298 to 324 (RGATLPGAWRGVVFYLKPNWQKLLETG) are Extracellular-facing. The helical transmembrane segment at 325–347 (VWVDAAAQIFFSLGPGFGVLLAF) threads the bilayer. Ser336 serves as a coordination point for Na(+). The Cytoplasmic segment spans residues 348–360 (ASYNKFNNNCYQD). A helical membrane pass occupies residues 361 to 380 (ALVTSVVNCMTSFVSGFVIF). Position 368 (Asn368) interacts with Na(+). The Extracellular portion of the chain corresponds to 381–421 (TVLGYMAEMRNEDVSEVAKDAGPSLLFITYAEAIANMPAST). Residues 422–443 (FFAIIFFLMLITLGLDSTFAGL) traverse the membrane as a helical segment. Na(+) contacts are provided by Leu434, Asp437, and Ser438. Thr439 provides a ligand contact to serotonin. Over 444–463 (EGVITAVLDEFPHIWAKRRE) the chain is Cytoplasmic. A helical membrane pass occupies residues 464–483 (WFVLIVVITCVLGSLLTLTS). Residues 484–494 (GGAYVVTLLEE) lie on the Extracellular side of the membrane. Residues Glu494 and Tyr495 each contribute to the serotonin site. Residues 495–516 (YATGPAVLTVALIEAVAVSWFY) form a helical membrane-spanning segment. The Cytoplasmic portion of the chain corresponds to 517–538 (GITQFCSDVKEMLGFSPGWFWR). The chain crosses the membrane as a helical span at residues 539-558 (ICWVAISPLFLLFIICSFLM). Residues Phe556 and Ser559 each contribute to the serotonin site. Topologically, residues 559–574 (SPPQLRLFQYNYPHWS) are extracellular. A helical transmembrane segment spans residues 575–595 (IVLGYCIGMSSVICIPTYIIY). The Cytoplasmic segment spans residues 596-630 (RLISTPGTLKERIIKSITPETPTEIPCGDIRMNAV). The segment at 616 to 624 (TPTEIPCGD) is interaction with RAB4A.

This sequence belongs to the sodium:neurotransmitter symporter (SNF) (TC 2.A.22) family. SLC6A4 subfamily. In terms of assembly, monomer or homooligomer. Interacts with TGFB1I1. Interacts with SEC23A, SEC24C and PATJ. Interacts with NOS1; the interaction may diminish the cell surface localization of SERT in the brain and, correspondingly, reduce serotonin reuptake. Interacts (via C-terminus) with SCAMP2; the interaction is direct and retains transporter molecules intracellularly. Interacts with filamentous actin and STX1A. Interacts (via the N-terminus) with STX1A (via the H3 domain); this interaction regulates SLC4A6 channel conductance. Interacts with ITGAV:ITGB3. Interacts (via C-terminus) with ITGB3; this interaction regulates SLC6A4 trafficking. Post-translationally, phosphorylation at Thr-276 increases 5-HT uptake and is required for cGMP-mediated SERT regulation. As to expression, expressed in the intestinal crypt epithelial cells and myenteric neurons of the small intestine (at protein level). Expressed in the brain.

It is found in the cell membrane. It localises to the endomembrane system. The protein resides in the endosome membrane. The protein localises to the synapse. Its subcellular location is the cell junction. It is found in the focal adhesion. It localises to the cell projection. The protein resides in the neuron projection. It carries out the reaction serotonin(out) + K(+)(in) + Na(+)(out) + H(+)(in) = serotonin(in) + K(+)(out) + Na(+)(in) + H(+)(out). Serotonin transporter that cotransports serotonin with one Na(+) ion in exchange for one K(+) ion and possibly one proton in an overall electroneutral transport cycle. Transports serotonin across the plasma membrane from the extracellular compartment to the cytosol thus limiting serotonin intercellular signaling. Essential for serotonin homeostasis in the central nervous system. In the developing somatosensory cortex, acts in glutamatergic neurons to control serotonin uptake and its trophic functions accounting for proper spatial organization of cortical neurons and elaboration of sensory circuits. In the mature cortex, acts primarily in brainstem raphe neurons to mediate serotonin uptake from the synaptic cleft back into the pre-synaptic terminal thus terminating serotonin signaling at the synapse. Modulates mucosal serotonin levels in the gastrointestinal tract through uptake and clearance of serotonin in enterocytes. Required for enteric neurogenesis and gastrointestinal reflexes. Regulates blood serotonin levels by ensuring rapid high affinity uptake of serotonin from plasma to platelets, where it is further stored in dense granules via vesicular monoamine transporters and then released upon stimulation. Mechanistically, the transport cycle starts with an outward-open conformation having Na1(+) and Cl(-) sites occupied. The binding of a second extracellular Na2(+) ion and serotonin substrate leads to structural changes to outward-occluded to inward-occluded to inward-open, where the Na2(+) ion and serotonin are released into the cytosol. Binding of intracellular K(+) ion induces conformational transitions to inward-occluded to outward-open and completes the cycle by releasing K(+) possibly together with a proton bound to Asp-98 into the extracellular compartment. Na1(+) and Cl(-) ions remain bound throughout the transport cycle. Additionally, displays serotonin-induced channel-like conductance for monovalent cations, mainly Na(+) ions. The channel activity is uncoupled from the transport cycle and may contribute to the membrane resting potential or excitability. In Rattus norvegicus (Rat), this protein is Sodium-dependent serotonin transporter (Slc6a4).